An 887-amino-acid polypeptide reads, in one-letter code: DNA gyrase subunit A (887 aa).

The 467-residue stretch at 35-501 (LPDVRDGLKP…GFEDLEDEDL (467 aa)) folds into the Topo IIA-type catalytic domain. The O-(5'-phospho-DNA)-tyrosine intermediate role is filled by Tyr123. The GyrA-box motif lies at 528-534 (QNRGGRG). Positions 811–865 (KEDAEDETNEDEQSTSTVSEDGTEQQREAVVNDETPGNAIHTEVIDSEENDEDGR) are disordered. Positions 813-823 (DAEDETNEDEQ) are enriched in acidic residues.

This sequence belongs to the type II topoisomerase GyrA/ParC subunit family. As to quaternary structure, heterotetramer, composed of two GyrA and two GyrB chains. In the heterotetramer, GyrA contains the active site tyrosine that forms a transient covalent intermediate with DNA, while GyrB binds cofactors and catalyzes ATP hydrolysis.

The protein resides in the cytoplasm. It carries out the reaction ATP-dependent breakage, passage and rejoining of double-stranded DNA.. Its function is as follows. A type II topoisomerase that negatively supercoils closed circular double-stranded (ds) DNA in an ATP-dependent manner to modulate DNA topology and maintain chromosomes in an underwound state. Negative supercoiling favors strand separation, and DNA replication, transcription, recombination and repair, all of which involve strand separation. Also able to catalyze the interconversion of other topological isomers of dsDNA rings, including catenanes and knotted rings. Type II topoisomerases break and join 2 DNA strands simultaneously in an ATP-dependent manner. This chain is DNA gyrase subunit A, found in Staphylococcus aureus (strain MSSA476).